The sequence spans 78 residues: uncharacterized protein (78 aa).

This protein may be involved in virus assembly. Essential for virus function. This is an uncharacterized protein from Sulfolobus spindle-shape virus 1 (SSV1).